A 273-amino-acid polypeptide reads, in one-letter code: Orotidine 5'-phosphate decarboxylase (273 aa).

The active-site Proton donor is lysine 97.

It belongs to the OMP decarboxylase family. Type 2 subfamily.

The catalysed reaction is orotidine 5'-phosphate + H(+) = UMP + CO2. Its pathway is pyrimidine metabolism; UMP biosynthesis via de novo pathway; UMP from orotate: step 2/2. This Cellvibrio japonicus (strain Ueda107) (Pseudomonas fluorescens subsp. cellulosa) protein is Orotidine 5'-phosphate decarboxylase.